Reading from the N-terminus, the 389-residue chain is 1-deoxy-D-xylulose 5-phosphate reductoisomerase (389 aa).

Residues threonine 10, glycine 11, serine 12, isoleucine 13, asparagine 38, and asparagine 122 each coordinate NADPH. 1-deoxy-D-xylulose 5-phosphate is bound at residue lysine 123. Position 124 (glutamate 124) interacts with NADPH. Residue aspartate 148 participates in Mn(2+) binding. Positions 149, 150, 173, and 196 each coordinate 1-deoxy-D-xylulose 5-phosphate. Mn(2+) is bound at residue glutamate 150. Glycine 202 contributes to the NADPH binding site. 1-deoxy-D-xylulose 5-phosphate-binding residues include serine 209, asparagine 214, lysine 215, and glutamate 218. Mn(2+) is bound at residue glutamate 218.

Belongs to the DXR family. Mg(2+) serves as cofactor. The cofactor is Mn(2+).

It carries out the reaction 2-C-methyl-D-erythritol 4-phosphate + NADP(+) = 1-deoxy-D-xylulose 5-phosphate + NADPH + H(+). The protein operates within isoprenoid biosynthesis; isopentenyl diphosphate biosynthesis via DXP pathway; isopentenyl diphosphate from 1-deoxy-D-xylulose 5-phosphate: step 1/6. Functionally, catalyzes the NADPH-dependent rearrangement and reduction of 1-deoxy-D-xylulose-5-phosphate (DXP) to 2-C-methyl-D-erythritol 4-phosphate (MEP). The polypeptide is 1-deoxy-D-xylulose 5-phosphate reductoisomerase (Wolbachia sp. subsp. Brugia malayi (strain TRS)).